A 126-amino-acid chain; its full sequence is Small ribosomal subunit protein uS13 (126 aa).

The segment at 94 to 126 (RGLPVHGQRTSTNARTRKGPRRAIAGKKKPGKK) is disordered. Residues 108 to 126 (RTRKGPRRAIAGKKKPGKK) are compositionally biased toward basic residues.

This sequence belongs to the universal ribosomal protein uS13 family. Part of the 30S ribosomal subunit. Forms a loose heterodimer with protein S19. Forms two bridges to the 50S subunit in the 70S ribosome.

Functionally, located at the top of the head of the 30S subunit, it contacts several helices of the 16S rRNA. In the 70S ribosome it contacts the 23S rRNA (bridge B1a) and protein L5 of the 50S subunit (bridge B1b), connecting the 2 subunits; these bridges are implicated in subunit movement. Contacts the tRNAs in the A and P-sites. In Streptomyces griseus subsp. griseus (strain JCM 4626 / CBS 651.72 / NBRC 13350 / KCC S-0626 / ISP 5235), this protein is Small ribosomal subunit protein uS13.